The chain runs to 41 residues: Trypsin inhibitor 2c (41 aa).

Cystine bridges form between C11-C32 and C15-C28.

In terms of biological role, inhibits bovine trypsin with a Ki of 0.174 nM and trypsin-like proteases from G.mellonella larvae. Has no activity against serine proteases chymotrypsin, subtilisin and elastase. Has no activity against cysteine proteases from beetle gut. The protein is Trypsin inhibitor 2c of Fagopyrum esculentum (Common buckwheat).